The sequence spans 411 residues: Intracellular hyaluronan-binding protein 4 (411 aa).

Phosphoserine occurs at positions 7 and 36. A coiled-coil region spans residues 42 to 62; the sequence is LREAEHRRQQQLQRKRRDEAA. The disordered stretch occupies residues 42–271; that stretch reads LREAEHRRQQ…ECQGTLDEES (230 aa). An Omega-N-methylarginine modification is found at arginine 70. Position 74 is a phosphoserine (serine 74). Basic and acidic residues predominate over residues 87-97; it reads GRRESQKERKS. Residue serine 108 is modified to Phosphoserine. Composition is skewed to basic and acidic residues over residues 138-181 and 205-229; these read VLER…DRPL and DSFD…RMED. Glycyl lysine isopeptide (Lys-Gly) (interchain with G-Cter in SUMO1); alternate cross-links involve residues lysine 212 and lysine 274. Glycyl lysine isopeptide (Lys-Gly) (interchain with G-Cter in SUMO2); alternate cross-links involve residues lysine 212 and lysine 274. Positions 279-301 form a coiled coil; it reads EVEEENQVQEMTLDEWKNLQEQT. The span at 296 to 313 shows a compositional bias: basic and acidic residues; it reads NLQEQTRPKPEFNIRKPE. A disordered region spans residues 296–318; that stretch reads NLQEQTRPKPEFNIRKPESTVPS. A Glycyl lysine isopeptide (Lys-Gly) (interchain with G-Cter in SUMO1); alternate cross-link involves residue lysine 334. A Glycyl lysine isopeptide (Lys-Gly) (interchain with G-Cter in SUMO2); alternate cross-link involves residue lysine 334. Phosphothreonine; by PKC occurs at positions 352 and 373. A disordered region spans residues 358–411; sequence NFGNLPRPGRGARGSTRGGRGRMRRTENYGPRAEVVTQDVAPNPDDPEDFPALA. A compositionally biased stretch (acidic residues) spans 402 to 411; it reads DDPEDFPALA.

The protein belongs to the SERBP1-HABP4 family. In terms of assembly, associates with ribosomes; promoting ribosome stabilization. Interacts with EEF2/eEF2; promoting ribosome stabilization. Interacts with FMR1. Interacts with FXR1 and FXR2. Interacts with CHD3 (via C-terminus). Interacts (via C-terminus) with RACK1. Interacts with p53/TP53. Interacts (via N-terminus) with SRSF9; this interaction is direct. Interacts with SYNCRIP; this interaction is direct. Interacts with MEF2C (via N-terminus); this interaction decreases DNA-binding activity of MEF2C in myocardial cells in response to mechanical stress. Interacts with PRMT1 (via N-terminus). Interacts with SPIN1. In terms of processing, phosphorylated by phorbol 12-myristate 13-acetate (PMA)-activated PKC isoforms at Thr-352 and Thr-373. Methylated. Methylation is decreased by phorbol 12-myristate 13-acetate (PMA)-activated PKC, in vitro. Expressed in adult heart, brain, liver, kidney, testis, and in various embryonic tissues, but not in adult spleen, lung or skeletal muscle.

The protein localises to the nucleus. Its subcellular location is the cytoplasm. It localises to the stress granule. It is found in the sarcoplasm. The protein resides in the nuclear body. The protein localises to the nucleolus. Its subcellular location is the nucleus speckle. It localises to the cajal body. It is found in the gem. In terms of biological role, ribosome-binding protein that promotes ribosome hibernation, a process during which ribosomes are stabilized in an inactive state and preserved from proteasomal degradation. Acts via its association with EEF2/eEF2 factor at the A-site of the ribosome, promoting ribosome stabilization in an inactive state compatible with storage. Plays a key role in ribosome hibernation in the mature oocyte by promoting ribosome stabilization. Ribosomes, which are produced in large quantities during oogenesis, are stored and translationally repressed in the oocyte and early embryo. Also binds RNA, regulating transcription and pre-mRNA splicing. Binds (via C-terminus) to poly(U) RNA. Seems to play a role in PML-nuclear bodies formation. Negatively regulates DNA-binding activity of the transcription factor MEF2C in myocardial cells in response to mechanical stress. The chain is Intracellular hyaluronan-binding protein 4 from Mus musculus (Mouse).